The primary structure comprises 513 residues: Serine/threonine protein phosphatase 2A 55 kDa regulatory subunit B alpha isoform (513 aa).

At M1 the chain carries N-acetylmethionine. 6 WD repeats span residues 36-75, 112-153, 232-270, 281-321, 340-378, and 483-513; these read QEVD…NSSG, EIEE…IKKI, AHDY…QSFN, DLSE…LCDS, EIIA…GPVA, and DYTT…MYYA.

It belongs to the phosphatase 2A regulatory subunit B family. As to quaternary structure, PP2A consists of a common heteromeric enzyme, composed of a catalytic subunit (subunits C), a constant regulatory subunit (subunit A), and a variety of regulatory subunits such as subunits B (the R2/B/PR55/B55, R3/B''/PR72/PR130/PR59 and R5/B'/B56 families). Interacts with SIC/RON3. In terms of tissue distribution, expressed ubiquitously.

In terms of biological role, the B regulatory subunit may modulate substrate selectivity and catalytic activity, and may also direct the localization of the catalytic enzyme to a particular subcellular compartment. In Arabidopsis thaliana (Mouse-ear cress), this protein is Serine/threonine protein phosphatase 2A 55 kDa regulatory subunit B alpha isoform (PP2AB1).